A 529-amino-acid chain; its full sequence is Mannuronan C5-epimerase (529 aa).

An N-terminal signal peptide occupies residues 1–30; sequence MGACAMNPQALKGSAMLAAAMLLASGAAMA. 6 PbH1 repeats span residues 229–256, 291–313, 315–338, 340–362, 364–386, and 387–409; these read GTETYISNTKMASFGYANSKSYGVSISQ, TTGFVIKGNTYKDNIVYGIDPHD, SHGLIIADNTVYGTKKKHGIIISR, VNDSFIFNNRSYDNKLSGLVLDR, SVNNFVADNEFYRNHTDGITLYE, and SGDNLLWGNKVIANRRHGIRVRN. His312 acts as the Proton acceptor in catalysis.

This sequence belongs to the D-mannuronate C5-epimerase family.

The protein localises to the periplasm. It catalyses the reaction [(1-&gt;4)-beta-D-mannuronosyl](n) = [alginate](n). It functions in the pathway glycan biosynthesis; alginate biosynthesis. In terms of biological role, catalyzes the epimerization of beta-D-mannuronate to alpha-L-guluronate during the synthesis of the linear polysaccharide alginate. In addition, is part of a periplasmic protein complex that protects alginate from degradation by AlgL by channeling the newly formed alginate polymer through a scaffold that transfers the alginate polymer through the periplasmic space to the outer membrane secretin AlgE. This chain is Mannuronan C5-epimerase, found in Pseudomonas fluorescens.